The chain runs to 206 residues: Sec-independent protein translocase protein TatB (206 aa).

The helical transmembrane segment at Met-1–Gly-21 threads the bilayer. The interval Glu-104 to Ala-206 is disordered. Residues Pro-110–Pro-124 show a composition bias toward low complexity. Over residues Glu-125–Glu-138 the composition is skewed to pro residues. 2 stretches are compositionally biased toward low complexity: residues Pro-139–Pro-151 and Ala-187–Pro-196.

It belongs to the TatB family. As to quaternary structure, the Tat system comprises two distinct complexes: a TatABC complex, containing multiple copies of TatA, TatB and TatC subunits, and a separate TatA complex, containing only TatA subunits. Substrates initially bind to the TatABC complex, which probably triggers association of the separate TatA complex to form the active translocon.

It localises to the cell inner membrane. Its function is as follows. Part of the twin-arginine translocation (Tat) system that transports large folded proteins containing a characteristic twin-arginine motif in their signal peptide across membranes. Together with TatC, TatB is part of a receptor directly interacting with Tat signal peptides. TatB may form an oligomeric binding site that transiently accommodates folded Tat precursor proteins before their translocation. In Rhizobium etli (strain ATCC 51251 / DSM 11541 / JCM 21823 / NBRC 15573 / CFN 42), this protein is Sec-independent protein translocase protein TatB.